Reading from the N-terminus, the 213-residue chain is 3-demethoxyubiquinol 3-hydroxylase (213 aa).

6 residues coordinate Fe cation: glutamate 62, glutamate 92, histidine 95, glutamate 144, glutamate 176, and histidine 179.

The protein belongs to the COQ7 family. Fe cation is required as a cofactor.

It localises to the cell membrane. It carries out the reaction a 5-methoxy-2-methyl-3-(all-trans-polyprenyl)benzene-1,4-diol + AH2 + O2 = a 3-demethylubiquinol + A + H2O. The protein operates within cofactor biosynthesis; ubiquinone biosynthesis. Functionally, catalyzes the hydroxylation of 2-nonaprenyl-3-methyl-6-methoxy-1,4-benzoquinol during ubiquinone biosynthesis. The polypeptide is 3-demethoxyubiquinol 3-hydroxylase (Legionella pneumophila (strain Corby)).